We begin with the raw amino-acid sequence, 310 residues long: Putative S-adenosyl-L-methionine-dependent methyltransferase Mb0151 (310 aa).

S-adenosyl-L-methionine-binding positions include Asp-132 and 161-162; that span reads DL.

This sequence belongs to the UPF0677 family.

Functionally, exhibits S-adenosyl-L-methionine-dependent methyltransferase activity. The protein is Putative S-adenosyl-L-methionine-dependent methyltransferase Mb0151 of Mycobacterium bovis (strain ATCC BAA-935 / AF2122/97).